We begin with the raw amino-acid sequence, 102 residues long: uncharacterized protein (102 aa).

Helical transmembrane passes span 21-43 and 58-80; these read FSSS…TPVF and SFAV…YFFC.

It is found in the membrane. This is an uncharacterized protein from Saccharomyces cerevisiae (strain ATCC 204508 / S288c) (Baker's yeast).